The following is a 282-amino-acid chain: Undecaprenyl-diphosphatase (282 aa).

Transmembrane regions (helical) follow at residues 1-21, 40-60, 85-105, 117-137, 196-216, 229-249, and 258-278; these read MTLF…FLPV, GAAF…IYFY, AAMG…GLLF, YWVS…EWSV, FSFL…LYHT, AITA…AFLI, and SIFI…IAAG.

It belongs to the UppP family.

The protein resides in the cell inner membrane. It catalyses the reaction di-trans,octa-cis-undecaprenyl diphosphate + H2O = di-trans,octa-cis-undecaprenyl phosphate + phosphate + H(+). Catalyzes the dephosphorylation of undecaprenyl diphosphate (UPP). Confers resistance to bacitracin. In Chlorobium phaeobacteroides (strain DSM 266 / SMG 266 / 2430), this protein is Undecaprenyl-diphosphatase.